The following is a 223-amino-acid chain: Enolase-phosphatase E1 (223 aa).

This sequence belongs to the HAD-like hydrolase superfamily. MasA/MtnC family. Monomer. Mg(2+) serves as cofactor.

It catalyses the reaction 5-methylsulfanyl-2,3-dioxopentyl phosphate + H2O = 1,2-dihydroxy-5-(methylsulfanyl)pent-1-en-3-one + phosphate. Its pathway is amino-acid biosynthesis; L-methionine biosynthesis via salvage pathway; L-methionine from S-methyl-5-thio-alpha-D-ribose 1-phosphate: step 3/6. It participates in amino-acid biosynthesis; L-methionine biosynthesis via salvage pathway; L-methionine from S-methyl-5-thio-alpha-D-ribose 1-phosphate: step 4/6. Its function is as follows. Bifunctional enzyme that catalyzes the enolization of 2,3-diketo-5-methylthiopentyl-1-phosphate (DK-MTP-1-P) into the intermediate 2-hydroxy-3-keto-5-methylthiopentenyl-1-phosphate (HK-MTPenyl-1-P), which is then dephosphorylated to form the acireductone 1,2-dihydroxy-3-keto-5-methylthiopentene (DHK-MTPene). This chain is Enolase-phosphatase E1, found in Aquifex aeolicus (strain VF5).